The chain runs to 161 residues: D-amino-acid N-acetyltransferase HPA3 (161 aa).

N-acetylserine is present on S2. One can recognise an N-acetyltransferase domain in the interval 14-161 (IVVKAIEPKD…DKVLYKRNGY (148 aa)). 98–111 (LYVTERARVKGVGR) is a binding site for acetyl-CoA.

Belongs to the acetyltransferase family. GNAT subfamily. In terms of processing, autoacetylates in an intermolecular reaction.

Its subcellular location is the cytoplasm. It localises to the nucleus. It catalyses the reaction a D-alpha-amino acid + acetyl-CoA = an N-acetyl-D-amino acid + CoA + H(+). N-acetyltransferase that acts on a wide range of D-amino acids. Catalyzes the N-acetylation through an ordered bi-bi mechanism, in which acetyl-CoA is the first substrate to be bound and CoA is the last product to be liberated. D-amino acids are toxic for the cell and their N-acetylation, preceding removal from cells, plays an important role in detoxification of D-amino acids. In vitro, capable of acetylating histone H4 at 'Lys-8' and polyamines like putrescine, spermidine and spermine. The sequence is that of D-amino-acid N-acetyltransferase HPA3 from Saccharomyces cerevisiae (strain ATCC 204508 / S288c) (Baker's yeast).